A 335-amino-acid polypeptide reads, in one-letter code: (+)-caryolan-1-ol synthase (335 aa).

Mg(2+) is bound by residues D83, D87, N220, S224, and E228. The DDXXD motif motif lies at 83 to 87; the sequence is DDEFD. The NSE/DTE motif motif lies at 220 to 228; sequence NDICSFEKE.

It belongs to the terpene synthase family. Mg(2+) serves as cofactor. The cofactor is Mn(2+).

The catalysed reaction is (2E,6E)-farnesyl diphosphate = (+)-(E)-beta-caryophyllene + diphosphate. It carries out the reaction (+)-(E)-beta-caryophyllene + H2O = (+)-caryolan-1-ol. The protein operates within secondary metabolite biosynthesis; terpenoid biosynthesis. In terms of biological role, sesquiterpene cyclase that first catalyzes the cyclization of farnesyl diphosphate (FPP) to the bicyclic sesquiterpene (+)-beta-caryophyllene intermediate, and then its conversion to (+)-caryolan-1-ol via a second cyclization and the addition of a water molecule. In Streptomyces griseus subsp. griseus (strain JCM 4626 / CBS 651.72 / NBRC 13350 / KCC S-0626 / ISP 5235), this protein is (+)-caryolan-1-ol synthase (gcoA).